The following is a 141-amino-acid chain: uncharacterized protein (141 aa).

The segment at 1-101 is disordered; that stretch reads FRGRAPRPLV…PDPGRSRRAT (101 aa). Positions 27–70 are enriched in basic and acidic residues; it reads QVRDCGREGDLRAGKAADRRLPRARETCSRFGEGVRQKDVHKGP.

This is an uncharacterized protein from Dhori virus (strain Indian/1313/61) (Dho).